A 1061-amino-acid chain; its full sequence is Ribonuclease E (1061 aa).

Residues 39–119 (ANIYKGKITR…GNKGAALTTF (81 aa)) form the S1 motif domain. The tract at residues 57–112 (FVDYGAERHGFLPLKEIAREYFPANYSAHGRPNIKDVLREGQEVIVQIDKEERGNK) is interaction with RNA. The segment at 169-170 (RT) is interaction with RNA 5'-terminal monophosphate. The Mg(2+) site is built by Asp303 and Asp346. Residues Cys404 and Cys407 each contribute to the Zn(2+) site. A required for zinc-mediated homotetramerization and catalytic activity region spans residues 404-407 (CPRC). Disordered stretches follow at residues 532–565 (FAMPDVPPAPTPAEPAAPVVAPAPKAAPATPAAP), 586–731 (EETK…KVRY), and 752–822 (EPIV…RYPT). Residues 536 to 546 (DVPPAPTPAEP) are compositionally biased toward pro residues. Positions 547 to 565 (AAPVVAPAPKAAPATPAAP) are enriched in low complexity. Composition is skewed to basic and acidic residues over residues 598 to 608 (AEAKPERQQDR), 615 to 640 (NRRDRNERRDTRSERTEGSDNREENR), and 652 to 690 (ETRESRQQAEVTEKARTADEQQAPRRERSRRRNDDKRQA). Residues 796–814 (RRSRRSPRHLRVSGQRRRR) are compositionally biased toward basic residues. An interaction with enolase region spans residues 833–850 (ASPELASGKVWIRYPIVR). Residues 1021–1061 (EAPRHSDWQRPTFAFEGKGAAGGHTATHHASAAPARPQPVE) are interaction with PNPase. Residues 1031 to 1061 (PTFAFEGKGAAGGHTATHHASAAPARPQPVE) are disordered. Residues 1043–1055 (GHTATHHASAAPA) show a composition bias toward low complexity.

The protein belongs to the RNase E/G family. RNase E subfamily. In terms of assembly, component of the RNA degradosome, which is a multiprotein complex involved in RNA processing and mRNA degradation. Within the RNA degradosome, RNase E assembles into a homotetramer formed by a dimer of dimers. Tetramerization is essential for catalytic activity, but not for RNA-binding. Interacts with RhlB, PNPase (pnp) and enolase (eno). Interacts with DeaD at reduced temperature. The cofactor is Zn(2+). Requires Mg(2+) as cofactor.

The protein localises to the cytoplasm. It localises to the cell inner membrane. It catalyses the reaction Endonucleolytic cleavage of single-stranded RNA in A- and U-rich regions.. Its activity is regulated as follows. The presence of a 5'-monophosphate on substrate RNA accelerates its cleavage by catalytically activating the enzyme. Binding to the membrane stabilizes protein structure and increases affinity for the substrate. In terms of biological role, endoribonuclease that plays a central role in RNA processing and decay. Required for the maturation of 5S and 16S rRNAs and the majority of tRNAs. Also involved in the degradation of most mRNAs. Can also process other RNA species, such as RNAI, a molecule that controls the replication of ColE1 plasmid, and the cell division inhibitor DicF-RNA. It initiates the decay of RNAs by cutting them internally near their 5'-end. It is able to remove poly(A) tails by an endonucleolytic process. Required to initiate rRNA degradation during both starvation and quality control; acts after RNase PH (rph) exonucleolytically digests the 3'-end of the 16S rRNA. Degradation of 16S rRNA leads to 23S rRNA degradation. Processes the 3 tRNA(Pro) precursors immediately after the 3'-CCA to generate the mature ends. Its function is as follows. Prefers 5'-monophosphorylated substrates over 5'-triphosphorylated substrates. 5'-monophosphate-assisted cleavage requires at least 2 and preferably 3 or more unpaired 5'-terminal nucleotides. The optimal spacing between the 5' end and the scissile phosphate appears to be 8 nucleotides. Any sequence of unpaired nucleotides at the 5'-end is tolerated. The polypeptide is Ribonuclease E (Escherichia coli (strain K12)).